The primary structure comprises 509 residues: Protein disulfide-isomerase (509 aa).

A signal peptide spans 1–19 (MLSRALLCLALAWAARVGA). The region spanning 20-136 (DALEEEDNVL…IVNWLKKRTG (117 aa)) is the Thioredoxin 1 domain. Catalysis depends on nucleophile residues Cys55 and Cys58. Cysteines 55 and 58 form a disulfide. At Lys202 the chain carries N6-acetyllysine. Residues Lys224 and Lys273 each carry the N6-succinyllysine modification. Phosphoserine is present on residues Ser333 and Ser359. The region spanning 335 to 477 (ELTAEKITQF…FKKFLESGGQ (143 aa)) is the Thioredoxin 2 domain. Catalysis depends on nucleophile residues Cys399 and Cys402. Cys399 and Cys402 form a disulfide bridge. Position 429 is a phosphoserine (Ser429). Residues 506 to 509 (KDEL) carry the Prevents secretion from ER motif.

This sequence belongs to the protein disulfide isomerase family. Heterodimer; heterodimerizes with the protein microsomal triglyceride transfer MTTP. Homodimer. Monomers and homotetramers may also occur. Interacts with P4HA2, forming a heterotetramer consisting of 2 alpha subunits (P4HA2) and 2 beta (P4HB), where P4HB plays the role of a structural subunit; this tetramer catalyzes the formation of 4-hydroxyproline in collagen. Also constitutes the structural subunit of the microsomal triacylglycerol transfer protein MTTP in mammalian cells. Stabilizes both enzymes and retain them in the ER without contributing to the catalytic activity. Binds UBQLN1. Interacts with ERO1B. Interacts with ILDR2. Interacts with ERN1/IRE1A (via N-terminus); the interaction is enhanced by phosphorylation of P4HB by FAM20C in response to endoplasmic reticulum stress and results in attenuation of ERN1 activity. Phosphorylation of Ser-359 by FAM20C is induced by endoplasmic reticulum stress and results in a functional switch from oxidoreductase to molecular chaperone. It also promotes interaction with ERN1.

The protein resides in the endoplasmic reticulum. It localises to the endoplasmic reticulum lumen. The protein localises to the melanosome. It is found in the cell membrane. The catalysed reaction is Catalyzes the rearrangement of -S-S- bonds in proteins.. Its function is as follows. This multifunctional protein catalyzes the formation, breakage and rearrangement of disulfide bonds. At the cell surface, seems to act as a reductase that cleaves disulfide bonds of proteins attached to the cell. May therefore cause structural modifications of exofacial proteins. Inside the cell, seems to form/rearrange disulfide bonds of nascent proteins. At high concentrations and following phosphorylation by FAM20C, functions as a chaperone that inhibits aggregation of misfolded proteins. At low concentrations, facilitates aggregation (anti-chaperone activity). May be involved with other chaperones in the structural modification of the TG precursor in hormone biogenesis. Also acts as a structural subunit of various enzymes such as prolyl 4-hydroxylase and microsomal triacylglycerol transfer protein MTTP. Receptor for LGALS9; the interaction retains P4HB at the cell surface of Th2 T helper cells, increasing disulfide reductase activity at the plasma membrane, altering the plasma membrane redox state and enhancing cell migration. This Rattus norvegicus (Rat) protein is Protein disulfide-isomerase (P4hb).